The chain runs to 657 residues: tRNA 5-methylaminomethyl-2-thiouridine biosynthesis bifunctional protein MnmC (657 aa).

The tract at residues 1–239 (MTDRIVPATL…KRAMLVGEFA (239 aa)) is tRNA (mnm(5)s(2)U34)-methyltransferase. Residues 263 to 657 (IGAGLAGCAV…VRALRHGRVA (395 aa)) form an FAD-dependent cmnm(5)s(2)U34 oxidoreductase region.

In the N-terminal section; belongs to the methyltransferase superfamily. tRNA (mnm(5)s(2)U34)-methyltransferase family. The protein in the C-terminal section; belongs to the DAO family. FAD is required as a cofactor.

Its subcellular location is the cytoplasm. The enzyme catalyses 5-aminomethyl-2-thiouridine(34) in tRNA + S-adenosyl-L-methionine = 5-methylaminomethyl-2-thiouridine(34) in tRNA + S-adenosyl-L-homocysteine + H(+). Catalyzes the last two steps in the biosynthesis of 5-methylaminomethyl-2-thiouridine (mnm(5)s(2)U) at the wobble position (U34) in tRNA. Catalyzes the FAD-dependent demodification of cmnm(5)s(2)U34 to nm(5)s(2)U34, followed by the transfer of a methyl group from S-adenosyl-L-methionine to nm(5)s(2)U34, to form mnm(5)s(2)U34. The sequence is that of tRNA 5-methylaminomethyl-2-thiouridine biosynthesis bifunctional protein MnmC from Burkholderia pseudomallei (strain 668).